Consider the following 443-residue polypeptide: Protein king tubby (443 aa).

Disordered regions lie at residues 57–80 and 98–191; these read TNGSPGGINPVAMNTSRNHSNNMR and HELE…EGDV. Residues 68 to 80 are compositionally biased toward polar residues; it reads AMNTSRNHSNNMR. The span at 113 to 128 shows a compositional bias: low complexity; it reads QHQQSASHSANSTQSQ. A Phosphoserine modification is found at serine 136. Over residues 177–186 the composition is skewed to gly residues; sequence NGTGNGTGGE.

This sequence belongs to the TUB family.

The protein resides in the cytoplasm. It is found in the nucleus. Its subcellular location is the cell projection. The protein localises to the cilium membrane. It localises to the rhabdomere. The chain is Protein king tubby from Drosophila simulans (Fruit fly).